Consider the following 340-residue polypeptide: MTKPIILTGDRPTGKLHLGHYVGSLKNRVFLQNENKYKMFVFLADQQALTDHAKESELIQESIGNVALDYLSVGLDPKQSTIFIQSQIPELAELSMYYMNLVSLARLERNPTVKTEIAQKGFGESIPSGFLVYPVSQAADITAFKANLVPVGNDQKPMIEQTREIVRSFNHTYHTDCLVEPEGIYPENEKAGRLPGLDGNAKMSKSLGNGIYLSDDADTVRKKVMSMYTDPNHIKIEDPGQIEGNMVFHYLDIFARKEDQADIEAMKEHYQRGGLGDVKTKRYLLDILERELAPIRERRLEYAKDMGEVFRMLQEGSQKARTVAAKTLSEVKSAMGINYF.

Residues 11 to 13 (RPT) and 19 to 20 (GH) contribute to the ATP site. A 'HIGH' region motif is present at residues 12 to 20 (PTGKLHLGH). Asp-140 contacts L-tryptophan. ATP contacts are provided by residues 152 to 154 (GND), Leu-194, and 202 to 206 (KMSKS). The 'KMSKS' region motif lies at 202-206 (KMSKS).

The protein belongs to the class-I aminoacyl-tRNA synthetase family. In terms of assembly, homodimer.

Its subcellular location is the cytoplasm. The catalysed reaction is tRNA(Trp) + L-tryptophan + ATP = L-tryptophyl-tRNA(Trp) + AMP + diphosphate + H(+). Its function is as follows. Catalyzes the attachment of tryptophan to tRNA(Trp). The polypeptide is Tryptophan--tRNA ligase (Streptococcus pyogenes serotype M3 (strain ATCC BAA-595 / MGAS315)).